Consider the following 388-residue polypeptide: Biotin synthase (388 aa).

The region spanning 47–277 (WFGRRVKLNY…DVEVRIAGGR (231 aa)) is the Radical SAM core domain. The [4Fe-4S] cluster site is built by C65, C69, and C72. Positions 109, 142, 202, and 272 each coordinate [2Fe-2S] cluster. The disordered stretch occupies residues 335–371 (APAGGCGSEQSAGCGSHEGGGACGSAPAPRTDEARTD).

Belongs to the radical SAM superfamily. Biotin synthase family. In terms of assembly, homodimer. [4Fe-4S] cluster is required as a cofactor. Requires [2Fe-2S] cluster as cofactor.

The enzyme catalyses (4R,5S)-dethiobiotin + (sulfur carrier)-SH + 2 reduced [2Fe-2S]-[ferredoxin] + 2 S-adenosyl-L-methionine = (sulfur carrier)-H + biotin + 2 5'-deoxyadenosine + 2 L-methionine + 2 oxidized [2Fe-2S]-[ferredoxin]. It functions in the pathway cofactor biosynthesis; biotin biosynthesis; biotin from 7,8-diaminononanoate: step 2/2. Catalyzes the conversion of dethiobiotin (DTB) to biotin by the insertion of a sulfur atom into dethiobiotin via a radical-based mechanism. This is Biotin synthase from Streptomyces avermitilis (strain ATCC 31267 / DSM 46492 / JCM 5070 / NBRC 14893 / NCIMB 12804 / NRRL 8165 / MA-4680).